We begin with the raw amino-acid sequence, 299 residues long: Meso-diaminopimelate D-dehydrogenase (299 aa).

NADP(+) is bound by residues Tyr-11 to Ile-14, Arg-36, Cys-67 to Thr-70, Ser-90 to Asp-92, and Ala-119 to Pro-123. Residues Asp-92, Asp-122, Phe-146, Met-152–Gly-153, Thr-171, Arg-181, His-227, and Asn-253 each bind substrate.

Belongs to the diaminopimelate dehydrogenase family. Homodimer.

It carries out the reaction meso-2,6-diaminopimelate + NADP(+) + H2O = (S)-2-amino-6-oxoheptanedioate + NH4(+) + NADPH + H(+). It functions in the pathway amino-acid biosynthesis; L-lysine biosynthesis via DAP pathway; DL-2,6-diaminopimelate from (S)-tetrahydrodipicolinate: step 1/1. Its function is as follows. Catalyzes the reversible NADPH-dependent reductive amination of L-2-amino-6-oxopimelate, the acyclic form of L-tetrahydrodipicolinate, to generate the meso compound, D,L-2,6-diaminopimelate. Probably plays a role in lysine biosynthesis. Exhibits a high substrate specificity for meso-2,6-diaminopimelate (m-DAP), since the activity with L,L-2,6-diaminopimelate is less than 5% of the activity observed with m-DAP. Can use NAD(+) only very poorly since the activity observed in the presence of NAD(+) is about 14% of that with NADP(+). In Bacteroides fragilis (strain ATCC 25285 / DSM 2151 / CCUG 4856 / JCM 11019 / LMG 10263 / NCTC 9343 / Onslow / VPI 2553 / EN-2), this protein is Meso-diaminopimelate D-dehydrogenase (ddh).